Consider the following 250-residue polypeptide: Aquaporin SIP2-1 (250 aa).

Transmembrane regions (helical) follow at residues 14–34 (PWLV…GALV) and 55–75 (VALS…TGGA). The short motif at 78 to 80 (NPL) is the NPA 1 element. 4 consecutive transmembrane segments (helical) span residues 95–115 (LYLF…ILGV), 132–152 (SVGV…VVIV), 178–200 (FHLL…AWAY), and 211–231 (LLVY…VVTL). An NPA 2 motif is present at residues 191–193 (NPA).

The protein belongs to the MIP/aquaporin (TC 1.A.8) family. SIP (TC 1.A.8.10) subfamily. Expressed in leaves and anthers, and at lower levels in roots.

The protein localises to the membrane. In terms of biological role, aquaporins facilitate the transport of water and small neutral solutes across cell membranes. The protein is Aquaporin SIP2-1 (SIP2-1) of Oryza sativa subsp. japonica (Rice).